Here is a 183-residue protein sequence, read N- to C-terminus: Capsid protein (183 aa).

The interval 143–183 (LPETTVVRRRGRSPRRRTPSPRRRRSKSPRRRRSQSRESQC) is disordered. Over residues 149-176 (VRRRGRSPRRRTPSPRRRRSKSPRRRRS) the composition is skewed to basic residues. S155, S162, and S170 each carry phosphoserine; by host. A 1; half-length repeat occupies 155–160 (SPRRRT). The 3 X 7 AA repeats of S-P-R-R-R-[PR]-S stretch occupies residues 155 to 176 (SPRRRTPSPRRRRSKSPRRRRS). The Bipartite nuclear localization signal signature appears at 158 to 175 (RRTPSPRRRRSKSPRRRR). 2 consecutive repeat copies span residues 162–168 (SPRRRRS) and 170–176 (SPRRRRS). The interval 177 to 183 (QSRESQC) is RNA binding.

Belongs to the orthohepadnavirus core antigen family. Homodimerizes, then multimerizes. Interacts with cytosol exposed regions of viral L glycoprotein present in the reticulum-to-Golgi compartment. Interacts with human FLNB. Phosphorylated form interacts with host importin alpha; this interaction depends on the exposure of the NLS, which itself depends upon genome maturation and/or phosphorylation of the capsid protein. Interacts with host NUP153. Post-translationally, phosphorylated by host SRPK1, SRPK2, and maybe protein kinase C or GAPDH. Phosphorylation is critical for pregenomic RNA packaging. Protein kinase C phosphorylation is stimulated by HBx protein and may play a role in transport of the viral genome to the nucleus at the late step during the viral replication cycle.

It is found in the virion. The protein resides in the host cytoplasm. In terms of biological role, self assembles to form an icosahedral capsid. Most capsids appear to be large particles with an icosahedral symmetry of T=4 and consist of 240 copies of capsid protein, though a fraction forms smaller T=3 particles consisting of 180 capsid proteins. Entering capsids are transported along microtubules to the nucleus. Phosphorylation of the capsid is thought to induce exposure of nuclear localization signal in the C-terminal portion of the capsid protein that allows binding to the nuclear pore complex via the importin (karyopherin-) alpha and beta. Capsids are imported in intact form through the nuclear pore into the nuclear basket, where it probably binds NUP153. Only capsids that contain the mature viral genome can release the viral DNA and capsid protein into the nucleoplasm. Immature capsids get stuck in the basket. Capsids encapsulate the pre-genomic RNA and the P protein. Pre-genomic RNA is reverse-transcribed into DNA while the capsid is still in the cytoplasm. The capsid can then either be directed to the nucleus, providing more genomes for transcription, or bud through the endoplasmic reticulum to provide new virions. The chain is Capsid protein from Homo sapiens (Human).